A 64-amino-acid chain; its full sequence is Myotoxin-2 (64 aa).

The signal sequence occupies residues 1–21 (KILYLLFAFLFLAFLSEPGNA). A disulfide bond links Cys-32 and Cys-51.

This sequence belongs to the crotamine-myotoxin family. As to quaternary structure, monomer. As to expression, expressed by the venom gland.

The protein resides in the secreted. In terms of biological role, cationic peptide that possesses multiple functions. It acts as a cell-penetrating peptide (CPP), and as a potent voltage-gated potassium channel (Kv) inhibitor. It exhibits antimicrobial activities, hind limb paralysis, and severe muscle necrosis by a non-enzymatic mechanism. This chain is Myotoxin-2, found in Crotalus durissus terrificus (South American rattlesnake).